We begin with the raw amino-acid sequence, 896 residues long: Pentatricopeptide repeat-containing protein At5g03800 (896 aa).

17 PPR repeats span residues 113 to 143 (KTRL…LSSP), 144 to 178 (TVVS…GLVQ), 180 to 214 (NEYT…GFLN), 215 to 247 (SVFV…IPQR), 248 to 278 (DVAS…MNRV), 284 to 318 (DSFT…GLMQ), 319 to 349 (ELSV…MMAQ), 350 to 380 (DAVT…VTEK), 381 to 415 (NTIT…GVEL), 416 to 450 (TDFS…GTAF), 451 to 481 (NPCI…WPSN), 484 to 519 (SSKA…KLFL), 520 to 554 (DEVS…GYFS), 555 to 585 (DISL…MREH), 586 to 620 (DVIS…EIKP), 621 to 653 (DIIT…MKTI), and 659 to 689 (TTEH…MPVQ). The tract at residues 694–769 (VLRALLDSCR…HPAKSWIIHE (76 aa)) is type E motif. A type E(+) motif region spans residues 770–800 (NKIHSFHARDTSHPQEKDIYRGLEILIMECL). Residues 801–896 (KVGYEPNTEY…NGKCSCRDLW (96 aa)) form a type DYW motif region.

It belongs to the PPR family. PCMP-H subfamily.

In terms of biological role, may play a role in embryogenesis. The protein is Pentatricopeptide repeat-containing protein At5g03800 (EMB175) of Arabidopsis thaliana (Mouse-ear cress).